The chain runs to 1330 residues: Nephrocystin-3 (1330 aa).

Gly-2 carries the N-myristoyl glycine lipid modification. Positions 83–207 (ELEYAAAEYE…QRLQAQGIQV (125 aa)) form a coiled coil. TPR repeat units lie at residues 471–504 (IPEEDDFGDVLWDIHDEQEQMETFQQASNSAHEL), 885–918 (CLLNLFVSQNLYKRGHFAELLSYWQFVGKDKSAM), 920–942 (TEYFDSLKQYEKNCEGEDNMSCL), 943–976 (ADLYETLGRFLKDLGLLSQAIVPLQRSLEIRETA), 985–1018 (AQSLHQLASVYVQWKKFGNAEQLYKQALEISENA), 1027–1060 (ARELEALATLYQKQNKYEQAEHFRKKSFKIHQKA), 1093–1126 (ARTLNELGVLYYLQNNLETADQFLKRSLEMRERV), 1135–1168 (AQSLNNLAALCNEKKQYDKAEELYERALDIRRRA), 1177–1210 (AYTVKHLAILYKKMGKLDKAVPLYELAVEIRQKS), 1219–1252 (ATALVNLAVLYSQMKKHVEALPLYERALKIYEDS), and 1261–1294 (GETLKNLAVLSYEGGDFEKAAELYKRAMEIKEAE). Residues 1296–1330 (SLLGGKAPSRHSSSGDTFSLKTAHSPNVFLQQGQR) are disordered. Over residues 1305–1330 (RHSSSGDTFSLKTAHSPNVFLQQGQR) the composition is skewed to polar residues.

In terms of assembly, interacts with NPHP1 and INVS/NPHP2. Interacts (when myristoylated) with UNC119 and UNC119B; interaction is required for localization to cilium. Interacts with CEP164. Component of a complex containing at least ANKS6, INVS, NEK8 and NPHP3. ANKS6 may organize complex assembly by linking INVS and NPHP3 to NEK8 and INVS may target the complex to the proximal ciliary axoneme. Widely expressed at low level. Expressed in heart, placenta, liver, skeletal muscle, kidney and pancreas. Expressed at very low level in brain and lung.

It is found in the cell projection. The protein localises to the cilium. Its function is as follows. Required for normal ciliary development and function. Inhibits disheveled-1-induced canonical Wnt-signaling activity and may also play a role in the control of non-canonical Wnt signaling which regulates planar cell polarity. Probably acts as a molecular switch between different Wnt signaling pathways. Required for proper convergent extension cell movements. The protein is Nephrocystin-3 (NPHP3) of Homo sapiens (Human).